Here is a 97-residue protein sequence, read N- to C-terminus: Large ribosomal subunit protein eL30 (97 aa).

It belongs to the eukaryotic ribosomal protein eL30 family.

This is Large ribosomal subunit protein eL30 from Methanoregula boonei (strain DSM 21154 / JCM 14090 / 6A8).